The primary structure comprises 193 residues: Adenine phosphoribosyltransferase (193 aa).

This sequence belongs to the purine/pyrimidine phosphoribosyltransferase family. As to quaternary structure, homodimer.

Its subcellular location is the cytoplasm. The catalysed reaction is AMP + diphosphate = 5-phospho-alpha-D-ribose 1-diphosphate + adenine. Its pathway is purine metabolism; AMP biosynthesis via salvage pathway; AMP from adenine: step 1/1. Its function is as follows. Catalyzes a salvage reaction resulting in the formation of AMP, that is energically less costly than de novo synthesis. This is Adenine phosphoribosyltransferase from Bifidobacterium longum (strain NCC 2705).